The sequence spans 163 residues: Transcription antitermination protein NusB (163 aa).

It belongs to the NusB family.

Involved in transcription antitermination. Required for transcription of ribosomal RNA (rRNA) genes. Binds specifically to the boxA antiterminator sequence of the ribosomal RNA (rrn) operons. The chain is Transcription antitermination protein NusB from Chlorobium luteolum (strain DSM 273 / BCRC 81028 / 2530) (Pelodictyon luteolum).